We begin with the raw amino-acid sequence, 1094 residues long: DNA polymerase delta catalytic subunit (1094 aa).

Residues Cys-1003, Cys-1006, Cys-1016, and Cys-1019 each contribute to the Zn(2+) site. Residues 1003 to 1019 form a CysA-type zinc finger; the sequence is CIGCNSSIKKPPLCNHC. 4 residues coordinate [4Fe-4S] cluster: Cys-1049, Cys-1052, Cys-1062, and Cys-1067. Residues 1049–1067 carry the CysB motif motif; sequence CQRCQGNLHVDVICMNRDC.

The protein belongs to the DNA polymerase type-B family. As to quaternary structure, heterodimer composed of a catalytic subunit POLD and a small regulatory subunit. Requires [4Fe-4S] cluster as cofactor. The cofactor is Mg(2+).

The protein localises to the nucleus. The enzyme catalyses DNA(n) + a 2'-deoxyribonucleoside 5'-triphosphate = DNA(n+1) + diphosphate. The small regulatory subunit delta and PCNA1 increase POLD catalytic activity. Its function is as follows. This polymerase possesses two enzymatic activities: DNA synthesis (polymerase) and an exonucleolytic activity that degrades single-stranded DNA in the 3'- to 5'-direction. This chain is DNA polymerase delta catalytic subunit (POLD), found in Plasmodium falciparum (isolate K1 / Thailand).